Consider the following 708-residue polypeptide: GID complex associated protein 12 (708 aa).

The segment covering 381–396 (SSRRNSSFSTASSEPR) has biased composition (low complexity). The interval 381 to 403 (SSRRNSSFSTASSEPRPLSRRRR) is disordered.

Interacts with core components of the GID/CTLH ubiquitin ligase complex. GID12 binds both the substrate receptor GID4 and the tip of GID5 in the scaffolding module, sealing GID4 onto the scaffold.

In terms of biological role, regulator of the GID E3 ligase complex. Modulates both assembly of the substrate receptor GID4 into the GID E3 ligase complex and its activity toward its substrates. GID12-binding remodels the N-degron binding pocket in the GID(SR4) complex, and could limit substrate accessibility of a bulky substrate to a ubiquitynation active site, thereby stabilizing gluconeogenic enzyme substrates. Involved in actin patch formation. This is GID complex associated protein 12 from Saccharomyces cerevisiae (strain ATCC 204508 / S288c) (Baker's yeast).